The primary structure comprises 208 residues: Large ribosomal subunit protein uL3 (208 aa).

This sequence belongs to the universal ribosomal protein uL3 family. As to quaternary structure, part of the 50S ribosomal subunit. Forms a cluster with proteins L14 and L19.

In terms of biological role, one of the primary rRNA binding proteins, it binds directly near the 3'-end of the 23S rRNA, where it nucleates assembly of the 50S subunit. The sequence is that of Large ribosomal subunit protein uL3 from Desulfosudis oleivorans (strain DSM 6200 / JCM 39069 / Hxd3) (Desulfococcus oleovorans).